Reading from the N-terminus, the 75-residue chain is Translational regulator CsrA (75 aa).

This sequence belongs to the CsrA/RsmA family. In terms of assembly, homodimer; the beta-strands of each monomer intercalate to form a hydrophobic core, while the alpha-helices form wings that extend away from the core.

It is found in the cytoplasm. Its function is as follows. A translational regulator that binds mRNA to regulate translation initiation and/or mRNA stability. Usually binds in the 5'-UTR at or near the Shine-Dalgarno sequence preventing ribosome-binding, thus repressing translation. Its main target seems to be the major flagellin gene, while its function is anatagonized by FliW. The chain is Translational regulator CsrA from Thermosipho melanesiensis (strain DSM 12029 / CIP 104789 / BI429).